The following is a 241-amino-acid chain: Copper transport protein CTR3 (241 aa).

Residues 1-41 (MNMGGSSSTAAKKATCKISMLWNWYTIDTCFIARSWRNDTK) are Lumenal-facing. A helical transmembrane segment spans residues 42 to 62 (GKFAGSCIGCFALVVVAQWLT). Over 63-159 (RFSRQFDVEL…SCCTLITPVD (97 aa)) the chain is Cytoplasmic. The helical transmembrane segment at 160-180 (LYPTFLDHMIRVTIFVLQWGL) threads the bilayer. Topologically, residues 181–182 (SY) are lumenal. Residues 183–203 (IIMLLFMYYNGYIIISCLIGA) form a helical membrane-spanning segment. Residues 204–241 (IVGRFIFCYEPLGSLGANGSAQGTVSYDKESDDRKCCL) lie on the Cytoplasmic side of the membrane.

This sequence belongs to the copper transporter (Ctr) (TC 1.A.56) family. SLC31A subfamily.

It is found in the cytoplasmic vesicle membrane. Functionally, required for high affinity copper (probably reduced Cu I) transport into the cell. The polypeptide is Copper transport protein CTR3 (CTR3) (Saccharomyces cerevisiae (strain ATCC 204508 / S288c) (Baker's yeast)).